A 362-amino-acid chain; its full sequence is Adenosine deaminase (362 aa).

His19 and His21 together coordinate Zn(2+). The substrate site is built by His21, Asp23, and Gly181. Position 208 (His208) interacts with Zn(2+). The active-site Proton donor is Glu211. Asp300 serves as a coordination point for Zn(2+).

The protein belongs to the metallo-dependent hydrolases superfamily. Adenosine and AMP deaminases family. Adenosine deaminase subfamily. The cofactor is Zn(2+).

The enzyme catalyses adenosine + H2O + H(+) = inosine + NH4(+). It catalyses the reaction 2'-deoxyadenosine + H2O + H(+) = 2'-deoxyinosine + NH4(+). In terms of biological role, catalyzes the hydrolytic deamination of adenosine and 2-deoxyadenosine. This chain is Adenosine deaminase, found in Mycobacterium marinum (strain ATCC BAA-535 / M).